A 380-amino-acid polypeptide reads, in one-letter code: Chaperone protein DnaJ (380 aa).

The J domain occupies 5-72 (DYYETLGVAK…QKRAAYDQYG (68 aa)). The segment at 140 to 218 (GKDTQIRIPS…CNGAGRIKSN (79 aa)) adopts a CR-type zinc-finger fold. Residues Cys153, Cys156, Cys170, Cys173, Cys192, Cys195, Cys206, and Cys209 each coordinate Zn(2+). CXXCXGXG motif repeat units follow at residues 153-160 (CSTCDGTG), 170-177 (CPTCSGSG), 192-199 (CPSCHGTG), and 206-213 (CTACNGAG). The interval 357 to 380 (LKKGGERHSPNAKSWTDRVKDLFK) is disordered.

It belongs to the DnaJ family. In terms of assembly, homodimer. Zn(2+) is required as a cofactor.

The protein resides in the cytoplasm. In terms of biological role, participates actively in the response to hyperosmotic and heat shock by preventing the aggregation of stress-denatured proteins and by disaggregating proteins, also in an autonomous, DnaK-independent fashion. Unfolded proteins bind initially to DnaJ; upon interaction with the DnaJ-bound protein, DnaK hydrolyzes its bound ATP, resulting in the formation of a stable complex. GrpE releases ADP from DnaK; ATP binding to DnaK triggers the release of the substrate protein, thus completing the reaction cycle. Several rounds of ATP-dependent interactions between DnaJ, DnaK and GrpE are required for fully efficient folding. Also involved, together with DnaK and GrpE, in the DNA replication of plasmids through activation of initiation proteins. The chain is Chaperone protein DnaJ from Methylibium petroleiphilum (strain ATCC BAA-1232 / LMG 22953 / PM1).